Here is a 272-residue protein sequence, read N- to C-terminus: Tryptophan synthase alpha chain (272 aa).

Active-site proton acceptor residues include E53 and D64.

It belongs to the TrpA family. As to quaternary structure, tetramer of two alpha and two beta chains.

It catalyses the reaction (1S,2R)-1-C-(indol-3-yl)glycerol 3-phosphate + L-serine = D-glyceraldehyde 3-phosphate + L-tryptophan + H2O. Its pathway is amino-acid biosynthesis; L-tryptophan biosynthesis; L-tryptophan from chorismate: step 5/5. In terms of biological role, the alpha subunit is responsible for the aldol cleavage of indoleglycerol phosphate to indole and glyceraldehyde 3-phosphate. In Xanthomonas campestris pv. campestris (strain 8004), this protein is Tryptophan synthase alpha chain.